The primary structure comprises 226 residues: Cytidylate kinase (226 aa).

Residue 12-20 (GPSGAGKGT) coordinates ATP.

The protein belongs to the cytidylate kinase family. Type 1 subfamily.

It is found in the cytoplasm. The enzyme catalyses CMP + ATP = CDP + ADP. The catalysed reaction is dCMP + ATP = dCDP + ADP. The polypeptide is Cytidylate kinase (Vibrio vulnificus (strain YJ016)).